Here is a 602-residue protein sequence, read N- to C-terminus: Probable translation initiation factor IF-2 (602 aa).

The 221-residue stretch at L9 to K229 folds into the tr-type G domain. Residues G18–T25 are G1. G18 to T25 contributes to the GTP binding site. Residues E43–E47 form a G2 region. The interval D82 to G85 is G3. GTP contacts are provided by residues D82–H86 and N136–D139. Residues N136–D139 are G4. Residues S204–K206 form a G5 region.

It belongs to the TRAFAC class translation factor GTPase superfamily. Classic translation factor GTPase family. IF-2 subfamily.

Function in general translation initiation by promoting the binding of the formylmethionine-tRNA to ribosomes. Seems to function along with eIF-2. This chain is Probable translation initiation factor IF-2 (infB), found in Sulfolobus acidocaldarius (strain ATCC 33909 / DSM 639 / JCM 8929 / NBRC 15157 / NCIMB 11770).